Consider the following 366-residue polypeptide: PTI1-like tyrosine-protein kinase 2 (366 aa).

The span at 8–23 shows a compositional bias: basic and acidic residues; sequence GDKKGDSDLSNEEVHL. Residues 8–50 are disordered; sequence GDKKGDSDLSNEEVHLKSPWQNSEANQKNQKPQAVVKPEAQKE. The span at 26–39 shows a compositional bias: polar residues; sequence PWQNSEANQKNQKP. The region spanning 71–353 is the Protein kinase domain; that stretch reads FGSKSLIGEG…IVVKALQPLL (283 aa). ATP contacts are provided by residues 77–85 and Lys-99; that span reads IGEGSYGRV. Asp-203 (proton acceptor) is an active-site residue.

It belongs to the protein kinase superfamily. Tyr protein kinase family. Interacts with OXI1. Post-translationally, autophosphorylated and phosphorylated by OXI1.

It catalyses the reaction L-tyrosyl-[protein] + ATP = O-phospho-L-tyrosyl-[protein] + ADP + H(+). With respect to regulation, strongly activated in response to phosphatidic acid (PA) and xylanase in a OXI1- and PDK1-dependent manner, and, to a lesser extent, by hydrogen peroxide and flagellin in a OXI1-dependent manner. Functionally, probable tyrosine-protein kinase involved in oxidative burst-mediated signaling leading to specific genes expression. In Arabidopsis thaliana (Mouse-ear cress), this protein is PTI1-like tyrosine-protein kinase 2 (PTI12).